A 221-amino-acid chain; its full sequence is uncharacterized protein (221 aa).

The protein localises to the mitochondrion. This is an uncharacterized protein from Paramecium tetraurelia.